We begin with the raw amino-acid sequence, 44 residues long: Thymosin beta-10 (44 aa).

Composition is skewed to basic and acidic residues over residues 1–25 (MADKPDMGEIASFDKAKLKKTETQE) and 33–44 (ETIEQEKRSEIS). Positions 1–44 (MADKPDMGEIASFDKAKLKKTETQEKNTLPTKETIEQEKRSEIS) are disordered. Ala-2 carries the post-translational modification N-acetylalanine. Lys-4 bears the N6-acetyllysine mark. The residue at position 12 (Ser-12) is a Phosphoserine. Residue Lys-15 is modified to N6-acetyllysine. Phosphothreonine is present on residues Thr-21, Thr-23, and Thr-34. At Lys-39 the chain carries N6-acetyllysine. At Ser-41 the chain carries Phosphoserine.

The protein belongs to the thymosin beta family.

The protein resides in the cytoplasm. It is found in the cytoskeleton. Plays an important role in the organization of the cytoskeleton. Binds to and sequesters actin monomers (G actin) and therefore inhibits actin polymerization. The protein is Thymosin beta-10 (Tmsb10) of Rattus norvegicus (Rat).